Here is a 337-residue protein sequence, read N- to C-terminus: tRNA dimethylallyltransferase (337 aa).

An ATP-binding site is contributed by 24 to 31; the sequence is GPTGAGKT. Residue 26–31 participates in substrate binding; it reads TGAGKT. Interaction with substrate tRNA stretches follow at residues 49-52 and 188-192; these read DSRQ and QRAVR.

The protein belongs to the IPP transferase family. As to quaternary structure, monomer. It depends on Mg(2+) as a cofactor.

The enzyme catalyses adenosine(37) in tRNA + dimethylallyl diphosphate = N(6)-dimethylallyladenosine(37) in tRNA + diphosphate. Catalyzes the transfer of a dimethylallyl group onto the adenine at position 37 in tRNAs that read codons beginning with uridine, leading to the formation of N6-(dimethylallyl)adenosine (i(6)A). This is tRNA dimethylallyltransferase from Nitratidesulfovibrio vulgaris (strain DSM 19637 / Miyazaki F) (Desulfovibrio vulgaris).